The chain runs to 196 residues: Acyl-homoserine-lactone synthase (196 aa).

It belongs to the autoinducer synthase family.

It catalyses the reaction a fatty acyl-[ACP] + S-adenosyl-L-methionine = an N-acyl-L-homoserine lactone + S-methyl-5'-thioadenosine + holo-[ACP] + H(+). Functionally, required for the synthesis of a yet unknown N-aceyl-homoserine lactone (N-aceyl-HSL), an autoinducer molecule which binds to PhzR and thus regulates phenazine production. The polypeptide is Acyl-homoserine-lactone synthase (phzI) (Pseudomonas fluorescens).